The following is a 178-amino-acid chain: Large ribosomal subunit protein uL6 (178 aa).

Belongs to the universal ribosomal protein uL6 family. As to quaternary structure, part of the 50S ribosomal subunit.

Its function is as follows. This protein binds to the 23S rRNA, and is important in its secondary structure. It is located near the subunit interface in the base of the L7/L12 stalk, and near the tRNA binding site of the peptidyltransferase center. In Staphylococcus saprophyticus subsp. saprophyticus (strain ATCC 15305 / DSM 20229 / NCIMB 8711 / NCTC 7292 / S-41), this protein is Large ribosomal subunit protein uL6.